A 356-amino-acid polypeptide reads, in one-letter code: Guanine nucleotide-binding protein alpha-17 subunit (356 aa).

A lipid anchor (N-myristoyl glycine) is attached at Gly2. Cys4 carries the S-palmitoyl cysteine lipid modification. A G-alpha domain is found at Ser32–Met356. The segment at Lys35–Thr48 is G1 motif. Residues Gly40–Ser47, Leu177–Thr183, Asp202–Gln206, Asn271–Asp274, and Ala328 each bind GTP. Mg(2+) is bound by residues Ser47 and Thr183. The G2 motif stretch occupies residues Asp175–Thr183. Residues Phe198 to Arg207 form a G3 motif region. Positions Ile267–Asp274 are G4 motif. A G5 motif region spans residues Thr326–Thr331.

The protein belongs to the G-alpha family. As to quaternary structure, g proteins are composed of 3 units; alpha, beta and gamma. The alpha chain contains the guanine nucleotide binding site.

It localises to the cell projection. The protein localises to the cilium. Its subcellular location is the dendrite. Guanine nucleotide-binding proteins (G proteins) are involved as modulators or transducers in various transmembrane signaling systems. This specific G-alpha subunit plays an important role in olfaction and in cilia morphogenesis. Involved in chemotactic responses to attractants diacetyl, pyrazine, 2,4,5-trimethylthiazole, benzaldehyde, isoamyl alcohol, butanone and 2,3-pentanedione. Displays a redundant function with gpa-3 in chemotactic responses. Involved in avoidance responses to copper, sodium dodecyl sulfate and linoleic acid. Involved in osmotic avoidance and mechanosensory responses. Involved in specifying fan-like morphology of cilia of head sensory neurons AWC. This Caenorhabditis briggsae protein is Guanine nucleotide-binding protein alpha-17 subunit (odr-3).